The following is a 357-amino-acid chain: MAELQEVQITEEKPLLPGQTPEAAKTHSVETPYGSVTFTVYGTPKPKRPAILTYHDVGLNYKSCFQPLFQFEDMQEIIQNFVRVHVDAPGMEEGAPVFPLGYQYPSLDQLADMIPCVLQYLNFSTIIGVGVGAGAYILARYALNHPDTVEGLVLINIDPNAKRWMDWAAHKLTGLTSSIPEMILGHLFSQEELSGNSELIQKYRNIITHAPNLDNIELYWNSYNNRRDLNFERGGDITLKCPVMLVVGDQAPHEDAVVECNSKLDPTQTSFLKMADSGGQPQLTQPGKLTEAFKYFLQGMGYMASSCMTRLSRSRTASLTSAASVDGNRSRSRTLSQSSESGTLSSGPPGHTMEVSC.

The segment at 1–28 is disordered; it reads MAELQEVQITEEKPLLPGQTPEAAKTHS. Alanine 2 carries the N-acetylalanine modification. Threonine 20 is subject to Phosphothreonine. Phosphoserine is present on residues serine 312 and serine 314. Threonine 316 bears the Phosphothreonine mark. At serine 318 the chain carries Phosphoserine. Threonine 320 is subject to Phosphothreonine. The disordered stretch occupies residues 320–357; the sequence is TSAASVDGNRSRSRTLSQSSESGTLSSGPPGHTMEVSC. A phosphoserine mark is found at serine 321, serine 324, and serine 330. Residues 333–347 are compositionally biased toward low complexity; it reads RTLSQSSESGTLSSG. Threonine 334 is subject to Phosphothreonine. Residues serine 336, serine 338, serine 339, and serine 341 each carry the phosphoserine modification. Position 343 is a phosphothreonine (threonine 343). At serine 356 the chain carries Phosphoserine.

The protein belongs to the NDRG family. In terms of assembly, interacts with CTNNB1.

The protein localises to the cytoplasm. It is found in the perinuclear region. The protein resides in the cell projection. Its subcellular location is the growth cone. Its function is as follows. Contributes to the regulation of the Wnt signaling pathway. Down-regulates CTNNB1-mediated transcriptional activation of target genes, such as CCND1, and may thereby act as tumor suppressor. May be involved in dendritic cell and neuron differentiation. The polypeptide is Protein NDRG2 (NDRG2) (Pan troglodytes (Chimpanzee)).